A 479-amino-acid chain; its full sequence is Aspartyl/glutamyl-tRNA(Asn/Gln) amidotransferase subunit B (479 aa).

This sequence belongs to the GatB/GatE family. GatB subfamily. In terms of assembly, heterotrimer of A, B and C subunits.

The catalysed reaction is L-glutamyl-tRNA(Gln) + L-glutamine + ATP + H2O = L-glutaminyl-tRNA(Gln) + L-glutamate + ADP + phosphate + H(+). It catalyses the reaction L-aspartyl-tRNA(Asn) + L-glutamine + ATP + H2O = L-asparaginyl-tRNA(Asn) + L-glutamate + ADP + phosphate + 2 H(+). Allows the formation of correctly charged Asn-tRNA(Asn) or Gln-tRNA(Gln) through the transamidation of misacylated Asp-tRNA(Asn) or Glu-tRNA(Gln) in organisms which lack either or both of asparaginyl-tRNA or glutaminyl-tRNA synthetases. The reaction takes place in the presence of glutamine and ATP through an activated phospho-Asp-tRNA(Asn) or phospho-Glu-tRNA(Gln). This chain is Aspartyl/glutamyl-tRNA(Asn/Gln) amidotransferase subunit B, found in Geobacter sulfurreducens (strain ATCC 51573 / DSM 12127 / PCA).